The chain runs to 530 residues: Cytochrome P450 78A6 (530 aa).

Residues 25–45 (LAFSLLAVTIIWLAISLFLWT) traverse the membrane as a helical segment. Position 474 (Cys474) interacts with heme.

Belongs to the cytochrome P450 family. Heme serves as cofactor. In terms of tissue distribution, expressed in leaves, sepals, petals, stamens, carpels and developing ovules.

It is found in the membrane. Plays a role in seed and fruit development. Functions probably in association with CYP78A9 in the regulation of seed growth. Acts maternally to promote seed growth. This is Cytochrome P450 78A6 (CYP78A6) from Arabidopsis thaliana (Mouse-ear cress).